A 368-amino-acid polypeptide reads, in one-letter code: Dual-specificity RNA methyltransferase RlmN (368 aa).

E94 (proton acceptor) is an active-site residue. In terms of domain architecture, Radical SAM core spans 100 to 334; that stretch reads EEDRATLCVS…VIVRKTRGDD (235 aa). A disulfide bridge connects residues C107 and C339. [4Fe-4S] cluster is bound by residues C114, C118, and C121. S-adenosyl-L-methionine contacts are provided by residues 163-164, S195, 217-219, and N296; these read GE and SLH. C339 (S-methylcysteine intermediate) is an active-site residue.

It belongs to the radical SAM superfamily. RlmN family. Requires [4Fe-4S] cluster as cofactor.

It localises to the cytoplasm. The enzyme catalyses adenosine(2503) in 23S rRNA + 2 reduced [2Fe-2S]-[ferredoxin] + 2 S-adenosyl-L-methionine = 2-methyladenosine(2503) in 23S rRNA + 5'-deoxyadenosine + L-methionine + 2 oxidized [2Fe-2S]-[ferredoxin] + S-adenosyl-L-homocysteine. It catalyses the reaction adenosine(37) in tRNA + 2 reduced [2Fe-2S]-[ferredoxin] + 2 S-adenosyl-L-methionine = 2-methyladenosine(37) in tRNA + 5'-deoxyadenosine + L-methionine + 2 oxidized [2Fe-2S]-[ferredoxin] + S-adenosyl-L-homocysteine. Specifically methylates position 2 of adenine 2503 in 23S rRNA and position 2 of adenine 37 in tRNAs. m2A2503 modification seems to play a crucial role in the proofreading step occurring at the peptidyl transferase center and thus would serve to optimize ribosomal fidelity. The protein is Dual-specificity RNA methyltransferase RlmN of Aeromonas salmonicida (strain A449).